Reading from the N-terminus, the 292-residue chain is Shikimate dehydrogenase (NADP(+)) (292 aa).

Residues 22 to 24 (SLS) and serine 69 each bind shikimate. Residue lysine 73 is the Proton acceptor of the active site. The shikimate site is built by asparagine 94 and aspartate 111. Residues 135–139 (GVGGA) and isoleucine 236 contribute to the NADP(+) site. Tyrosine 238 serves as a coordination point for shikimate. Glycine 260 contacts NADP(+).

This sequence belongs to the shikimate dehydrogenase family. In terms of assembly, homodimer.

It catalyses the reaction shikimate + NADP(+) = 3-dehydroshikimate + NADPH + H(+). It functions in the pathway metabolic intermediate biosynthesis; chorismate biosynthesis; chorismate from D-erythrose 4-phosphate and phosphoenolpyruvate: step 4/7. In terms of biological role, involved in the biosynthesis of the chorismate, which leads to the biosynthesis of aromatic amino acids. Catalyzes the reversible NADPH linked reduction of 3-dehydroshikimate (DHSA) to yield shikimate (SA). In Streptococcus pyogenes serotype M2 (strain MGAS10270), this protein is Shikimate dehydrogenase (NADP(+)).